The chain runs to 298 residues: Glycine--tRNA ligase alpha subunit (298 aa).

Belongs to the class-II aminoacyl-tRNA synthetase family. In terms of assembly, tetramer of two alpha and two beta subunits.

It localises to the cytoplasm. The enzyme catalyses tRNA(Gly) + glycine + ATP = glycyl-tRNA(Gly) + AMP + diphosphate. The sequence is that of Glycine--tRNA ligase alpha subunit from Helicobacter pylori (strain HPAG1).